Consider the following 125-residue polypeptide: Snaclec alboaggregin-A subunit beta (125 aa).

Residues 1–125 (GFDCPFGWSS…TRYPVCKFXG (125 aa)) form the C-type lectin domain. Cystine bridges form between C4-C15, C32-C121, and C98-C113.

Belongs to the snaclec family. As to quaternary structure, heterotetramer of the subunits alpha, alpha', beta and beta'; disulfide-linked. Expressed by the venom gland.

It localises to the secreted. Potent platelet activator that aggregates platelets via both GPIbalpha (GP1BA) and GPVI (GP6). Induces a tyrosine phosphorylation profile in platelets that resembles this produced by collagen, involving the time dependent tyrosine phosphorylation of Fc receptor gamma chain (FCGR1A), phospholipase Cgamma2 (PLCG2), and LAT. In Trimeresurus albolabris (White-lipped pit viper), this protein is Snaclec alboaggregin-A subunit beta.